Consider the following 279-residue polypeptide: Urease accessory protein UreD (279 aa).

The protein belongs to the UreD family. UreD, UreF and UreG form a complex that acts as a GTP-hydrolysis-dependent molecular chaperone, activating the urease apoprotein by helping to assemble the nickel containing metallocenter of UreC. The UreE protein probably delivers the nickel.

It localises to the cytoplasm. Required for maturation of urease via the functional incorporation of the urease nickel metallocenter. The sequence is that of Urease accessory protein UreD from Rhodopseudomonas palustris (strain HaA2).